Consider the following 96-residue polypeptide: Large ribosomal subunit protein uL23 (96 aa).

It belongs to the universal ribosomal protein uL23 family. Part of the 50S ribosomal subunit. Contacts protein L29, and trigger factor when it is bound to the ribosome.

Its function is as follows. One of the early assembly proteins it binds 23S rRNA. One of the proteins that surrounds the polypeptide exit tunnel on the outside of the ribosome. Forms the main docking site for trigger factor binding to the ribosome. The polypeptide is Large ribosomal subunit protein uL23 (Brevibacillus brevis (strain 47 / JCM 6285 / NBRC 100599)).